The following is a 365-amino-acid chain: Methionine import ATP-binding protein MetN (365 aa).

The region spanning 26–261 is the ABC transporter domain; the sequence is VRLVDLKRRF…PQSDITKSLL (236 aa). 58 to 65 contributes to the ATP binding site; that stretch reads GRSGAGKS.

The protein belongs to the ABC transporter superfamily. Methionine importer (TC 3.A.1.24) family. In terms of assembly, the complex is composed of two ATP-binding proteins (MetN), two transmembrane proteins (MetI) and a solute-binding protein (MetQ).

It is found in the cell inner membrane. The catalysed reaction is L-methionine(out) + ATP + H2O = L-methionine(in) + ADP + phosphate + H(+). It catalyses the reaction D-methionine(out) + ATP + H2O = D-methionine(in) + ADP + phosphate + H(+). Its function is as follows. Part of the ABC transporter complex MetNIQ involved in methionine import. Responsible for energy coupling to the transport system. In Mesorhizobium japonicum (strain LMG 29417 / CECT 9101 / MAFF 303099) (Mesorhizobium loti (strain MAFF 303099)), this protein is Methionine import ATP-binding protein MetN.